Here is a 117-residue protein sequence, read N- to C-terminus: Cell division protein FtsB (117 aa).

The Cytoplasmic portion of the chain corresponds to 1–6 (MRDWRW). A helical membrane pass occupies residues 7–24 (MLLVLALLLGWLQYRFWF). At 25-117 (GPGNSGEVMM…QVGEHPADVP (93 aa)) the chain is on the periplasmic side. Residues 29–69 (SGEVMMLEAQVTNQERDNEGLQQRNDALAAEVKDLKEGQSA) are a coiled coil.

The protein belongs to the FtsB family. Part of a complex composed of FtsB, FtsL and FtsQ.

It is found in the cell inner membrane. Functionally, essential cell division protein. May link together the upstream cell division proteins, which are predominantly cytoplasmic, with the downstream cell division proteins, which are predominantly periplasmic. The chain is Cell division protein FtsB from Stenotrophomonas maltophilia (strain R551-3).